The primary structure comprises 58 residues: T-cell receptor gamma alternate reading frame protein (58 aa).

Detected at low levels in the ductal cells of the salivary gland but not in the acinar cells (at protein level). Expressed in endometrium (at protein level). Expressed in epithelial cells within the acinar ducts of the prostate.

The polypeptide is T-cell receptor gamma alternate reading frame protein (Homo sapiens (Human)).